Reading from the N-terminus, the 564-residue chain is Major facilitator superfamily transporter MPN_076 (564 aa).

A run of 12 helical transmembrane segments spans residues 1–21, 65–85, 89–109, 176–196, 220–240, 249–269, 306–326, 358–378, 404–424, 425–445, 457–477, and 501–521; these read MLWA…FVID, ITLL…KFGY, VMIM…GDPL, IAGY…GTTL, NLWG…FQSV, VFIL…FAWF, MIGM…GGWW, AGLP…YMVF, IVIV…FAFV, AIAT…ILIL, VSVL…AFDI, and GAIA…AIVV.

It belongs to the major facilitator superfamily.

The protein resides in the cell membrane. The sequence is that of Major facilitator superfamily transporter MPN_076 from Mycoplasma pneumoniae (strain ATCC 29342 / M129 / Subtype 1) (Mycoplasmoides pneumoniae).